Reading from the N-terminus, the 347-residue chain is Calcium homeostasis modulator protein 3 (347 aa).

At methionine 1–asparagine 20 the chain is on the cytoplasmic side. The central pore stretch occupies residues glutamine 9–serine 36. Residues glycine 21–serine 36 traverse the membrane as a helical segment. The Extracellular segment spans residues leucine 37–asparagine 48. Disulfide bonds link cysteine 41/cysteine 126 and cysteine 43/cysteine 157. The helical transmembrane segment at alanine 49–asparagine 71 threads the bilayer. Topologically, residues arginine 72–methionine 98 are cytoplasmic. Cysteine 99 is lipidated: S-palmitoyl cysteine. A helical transmembrane segment spans residues cysteine 99–phenylalanine 124. Over valine 125–leucine 176 the chain is Extracellular. Asparagine 142 carries an N-linked (GlcNAc...) asparagine glycan. Residues arginine 177–arginine 202 traverse the membrane as a helical segment. Residues cysteine 200 and cysteine 204 are each lipidated (S-palmitoyl cysteine). Residues proline 203–valine 347 are Cytoplasmic-facing. Residues glycine 265–alanine 290 are disordered. Basic and acidic residues predominate over residues proline 277 to glycine 286.

This sequence belongs to the CALHM family. As to quaternary structure, associates with CALHM1 as a pore-forming subunit in a hetero-hexameric channel complex. Post-translationally, N-glycosylated. Palmitoylated by ZDHHC3 and ZDHHC15. Palmitoylation positively regulates CALHM1:CALHM3 channel conductance. In terms of tissue distribution, expressed in taste bud cells.

Its subcellular location is the basolateral cell membrane. It carries out the reaction ATP(in) = ATP(out). The catalysed reaction is Ca(2+)(in) = Ca(2+)(out). It catalyses the reaction Na(+)(in) = Na(+)(out). The enzyme catalyses K(+)(in) = K(+)(out). It carries out the reaction chloride(in) = chloride(out). Functionally, pore-forming subunit of gustatory voltage-gated ion channels required for sensory perception of sweet, bitter and umami tastes. With CALHM1 forms a fast-activating voltage-gated ATP-release channel in type II taste bud cells, ATP acting as a neurotransmitter to activate afferent neural gustatory pathways. Acts both as a voltage-gated and calcium-activated ion channel: mediates neuronal excitability in response to membrane depolarization and low extracellular Ca(2+) concentration. Has poor ion selectivity and forms a wide pore (around 14 Angstroms) that mediates permeation of small ions including Ca(2+), Na(+), K(+) and Cl(-), as well as larger ions such as ATP(4-). This Mus musculus (Mouse) protein is Calcium homeostasis modulator protein 3.